Consider the following 143-residue polypeptide: Anti-sigma F factor (143 aa).

Belongs to the anti-sigma-factor family.

It carries out the reaction L-seryl-[protein] + ATP = O-phospho-L-seryl-[protein] + ADP + H(+). The catalysed reaction is L-threonyl-[protein] + ATP = O-phospho-L-threonyl-[protein] + ADP + H(+). Functionally, binds to sigma F and blocks its ability to form an RNA polymerase holoenzyme (E-sigma F). Phosphorylates SpoIIAA on a serine residue. This phosphorylation may enable SpoIIAA to act as an anti-anti-sigma factor that counteracts SpoIIAB and thus releases sigma F from inhibition. The protein is Anti-sigma F factor of Thermoanaerobacter pseudethanolicus (strain ATCC 33223 / 39E) (Clostridium thermohydrosulfuricum).